The primary structure comprises 293 residues: Aspartate carbamoyltransferase catalytic subunit (293 aa).

Residues Arg50 and Thr51 each contribute to the carbamoyl phosphate site. Lys78 is a binding site for L-aspartate. The carbamoyl phosphate site is built by Arg100, His127, and Gln130. 2 residues coordinate L-aspartate: Arg160 and Arg210. Carbamoyl phosphate is bound by residues Ala253 and Pro254.

This sequence belongs to the aspartate/ornithine carbamoyltransferase superfamily. ATCase family. Heterododecamer (2C3:3R2) of six catalytic PyrB chains organized as two trimers (C3), and six regulatory PyrI chains organized as three dimers (R2).

The enzyme catalyses carbamoyl phosphate + L-aspartate = N-carbamoyl-L-aspartate + phosphate + H(+). It functions in the pathway pyrimidine metabolism; UMP biosynthesis via de novo pathway; (S)-dihydroorotate from bicarbonate: step 2/3. In terms of biological role, catalyzes the condensation of carbamoyl phosphate and aspartate to form carbamoyl aspartate and inorganic phosphate, the committed step in the de novo pyrimidine nucleotide biosynthesis pathway. The polypeptide is Aspartate carbamoyltransferase catalytic subunit (Staphylococcus epidermidis (strain ATCC 35984 / DSM 28319 / BCRC 17069 / CCUG 31568 / BM 3577 / RP62A)).